The primary structure comprises 188 residues: Transcription factor FapR (188 aa).

The protein belongs to the FapR family.

Its function is as follows. Transcriptional factor involved in regulation of membrane lipid biosynthesis by repressing genes involved in fatty acid and phospholipid metabolism. This Bacillus licheniformis (strain ATCC 14580 / DSM 13 / JCM 2505 / CCUG 7422 / NBRC 12200 / NCIMB 9375 / NCTC 10341 / NRRL NRS-1264 / Gibson 46) protein is Transcription factor FapR.